We begin with the raw amino-acid sequence, 237 residues long: Splicing factor U2AF 35 kDa subunit (237 aa).

The residue at position 2 (Ala2) is an N-acetylalanine. A C3H1-type 1 zinc finger spans residues 12-40 (EKDKVNCSFYFKIGACRHGDRCSRLHNKP). An N6-methyllysine modification is found at Lys39. 2 positions are modified to phosphoserine: Ser61 and Ser145. Positions 65-147 (LRCAVSDVEM…QPIHAELSPV (83 aa)) constitute an RRM domain. The C3H1-type 2 zinc-finger motif lies at 149-176 (DFREACCRQYEMGECTRGGFCNFMHLKP). Arg165 bears the Omega-N-methylarginine mark. The interval 185–237 (LYGRRRKKHRSRSRSRERRSRSRDRGRGGGGGGGGGRERDRRRSRDRERSGRF) is disordered. Basic residues predominate over residues 188 to 208 (RRRKKHRSRSRSRERRSRSRD). Over residues 220-237 (GRERDRRRSRDRERSGRF) the composition is skewed to basic and acidic residues.

It belongs to the splicing factor SR family. Identified in the spliceosome C complex. Heterodimer with U2AF2. Interacts (via RS domain) with PHF5A (via N-terminus). Interacts with ZRANB2. Interacts with SDE2. Interacts with SF3B1.

The protein localises to the nucleus. It is found in the nucleus speckle. Plays a critical role in both constitutive and enhancer-dependent splicing by mediating protein-protein interactions and protein-RNA interactions required for accurate 3'-splice site selection. Recruits U2 snRNP to the branch point. Directly mediates interactions between U2AF2 and proteins bound to the enhancers and thus may function as a bridge between U2AF2 and the enhancer complex to recruit it to the adjacent intron. In Bos taurus (Bovine), this protein is Splicing factor U2AF 35 kDa subunit (U2AF1).